Here is a 263-residue protein sequence, read N- to C-terminus: Small ribosomal subunit protein bS1c (263 aa).

S1 motif domains are found at residues 27–96, 114–178, and 192–260; these read GDIV…LSIR, DSLL…LSHR, and GNII…LSMK.

The protein belongs to the bacterial ribosomal protein bS1 family.

It localises to the plastid. The protein resides in the chloroplast. The sequence is that of Small ribosomal subunit protein bS1c (rps1) from Porphyra purpurea (Red seaweed).